The primary structure comprises 236 residues: Ribosome-inactivating protein saporin-3 (236 aa).

Glu148 is an active-site residue.

It belongs to the ribosome-inactivating protein family. Type 1 RIP subfamily.

It catalyses the reaction Endohydrolysis of the N-glycosidic bond at one specific adenosine on the 28S rRNA.. In terms of biological role, ribosome-inactivating protein of type 1, inhibits protein synthesis in animal cells. Useful as immunotoxin for pharmacological applications. This Saponaria officinalis (Common soapwort) protein is Ribosome-inactivating protein saporin-3 (SAP3).